The chain runs to 622 residues: Probable potassium transport system protein Kup (622 aa).

12 helical membrane-spanning segments follow: residues 8–28, 50–70, 101–121, 137–157, 165–185, 213–233, 247–267, 285–305, 337–357, 366–386, 393–413, and 419–439; these read LAVL…TSVL, ILSI…VSLV, VLLL…VITP, PTFT…LFAM, IGKF…LLGV, ITFI…ALYA, WFSV…ALLL, ALIP…QALI, IYMP…VVMF, AYGI…FYVI, PLAL…AFFA, and LFAG…LMIT.

Belongs to the HAK/KUP transporter (TC 2.A.72) family.

It localises to the cell inner membrane. The catalysed reaction is K(+)(in) + H(+)(in) = K(+)(out) + H(+)(out). In terms of biological role, transport of potassium into the cell. Likely operates as a K(+):H(+) symporter. The protein is Probable potassium transport system protein Kup of Polaromonas naphthalenivorans (strain CJ2).